Consider the following 299-residue polypeptide: NAD(+) hydrolase PdTIR (299 aa).

The 134-residue stretch at 164-297 (PPHDIFISHA…EIVADLMAII (134 aa)) folds into the TIR domain. Residues 173-174 (AW) and Arg203 contribute to the NAD(+) site. Residue Glu239 is part of the active site.

Homodimer. Interacts with host MYD88.

The enzyme catalyses NAD(+) + H2O = ADP-D-ribose + nicotinamide + H(+). In terms of biological role, NAD(+) hydrolase (NADase) that catalyzes cleavage of NAD(+) into ADP-D-ribose (ADPR) and nicotinamide. The protein is NAD(+) hydrolase PdTIR of Paracoccus denitrificans (strain Pd 1222).